Reading from the N-terminus, the 875-residue chain is Serine/threonine-protein phosphatase 4 regulatory subunit 4 (875 aa).

HEAT repeat units follow at residues 215–253 (ILPL…TKNV) and 254–292 (VLPE…RSQT). The stretch at 686-730 (MFQKKNYEKDLLDQEKEREELLFLEMEQLEKEKHQSDGRLASDKS) forms a coiled coil. Basic and acidic residues predominate over residues 718–739 (KHQSDGRLASDKSFEKKRRDSR). The tract at residues 718-773 (KHQSDGRLASDKSFEKKRRDSRTSTQSLSKNLPISVPGPSSSTASTSKEIKKSKLT) is disordered. Residues 740-764 (TSTQSLSKNLPISVPGPSSSTASTS) show a composition bias toward polar residues. S777 is modified (phosphoserine). T799 carries the phosphothreonine modification. The segment covering 825 to 859 (RNASSVPASFSPNPVMPSTSRGPGNTADPKSSGSK) has biased composition (polar residues). The disordered stretch occupies residues 825–875 (RNASSVPASFSPNPVMPSTSRGPGNTADPKSSGSKDAQPRKATLKSRKSNP). Positions 866-875 (ATLKSRKSNP) are enriched in basic residues.

Serine/threonine-protein phosphatase 4 (PP4) occurs in different assemblies of the catalytic and one or more regulatory subunits. Component of the PP4 complex PPP4C-PPP4R4.

It localises to the cytoplasm. In terms of biological role, putative regulatory subunit of serine/threonine-protein phosphatase 4. The sequence is that of Serine/threonine-protein phosphatase 4 regulatory subunit 4 (Ppp4r4) from Mus musculus (Mouse).